An 863-amino-acid polypeptide reads, in one-letter code: ATP-dependent helicase Lhr-Core protein 2 (863 aa).

The ATP site is built by F30, Q37, K60, T61, D179, E180, R377, and H380. The Helicase ATP-binding domain maps to 41–234 (VIEIHKGENV…FVFGFNDDGT (194 aa)). The short motif at 179-182 (DEVH) is the DEAH box element. Residues 275–424 (RLDELIEQHR…RIKIPQNPLD (150 aa)) enclose the Helicase C-terminal domain. The interval 418–512 (IPQNPLDVLV…AIYYMNTGTI (95 aa)) is WH domain. The domain 4 stretch occupies residues 513–863 (PDEAKIEVYT…KIMAMIGELE (351 aa)).

The protein belongs to the Lhr helicase family. Lhr-Core subfamily. As to quaternary structure, monomer.

The catalysed reaction is ATP + H2O = ADP + phosphate + H(+). Its activity is regulated as follows. Unwinding of dsRNA duplexes is inhibited by AMP-PMP and ATP-gamma-S. In terms of biological role, a DNA:RNA helicase with a significant strand annealing activity, probably involved in DNA repair and RNA transactions. In vitro has a slow helicase activity with a preference for 3'-overhang duplexes; displaces RNA from 3'-overhang DNA:RNA or RNA:RNA duplexes. 3'-tailed double-stranded (ds)DNA is not unwound. The slow helicase activity on RNA duplexes is ATP-independent. Has strand annealing properties in the absence of ATP; forms 3'-overhang DNA:RNA, 3'-overhang dsRNA and 3'-overhang dsDNA duplexes but not 5'-overhang duplexes. A nucleic acid-dependent ATPase; single-stranded (ss)DNA and RNA are equally stimulatory. Binds ssDNA, RNA, dsDNA and dsRNA duplexes. The sequence is that of ATP-dependent helicase Lhr-Core protein 2 from Thermococcus barophilus (strain DSM 11836 / MP).